The primary structure comprises 1036 residues: Chitin synthase 1 (1036 aa).

The span at Met-1–Val-10 shows a compositional bias: pro residues. Positions Met-1–Phe-153 are disordered. Asn-38 carries an N-linked (GlcNAc...) asparagine glycan. Residues Pro-86 to Ser-108 are compositionally biased toward low complexity. N-linked (GlcNAc...) asparagine glycosylation is present at Asn-179. The disordered stretch occupies residues Arg-189–Arg-229. Polar residues predominate over residues Ser-194–Thr-203. Helical transmembrane passes span Phe-659–Val-679, Ile-699–Leu-719, Thr-733–Ile-753, Ile-776–Phe-796, Ser-808–Cys-828, Tyr-908–Tyr-928, and Trp-945–Val-967. The segment at Ala-994–Leu-1019 is disordered. The segment covering Ser-1001–Leu-1019 has biased composition (low complexity).

The protein belongs to the chitin synthase family. Class II subfamily.

The protein resides in the cell membrane. The enzyme catalyses [(1-&gt;4)-N-acetyl-beta-D-glucosaminyl](n) + UDP-N-acetyl-alpha-D-glucosamine = [(1-&gt;4)-N-acetyl-beta-D-glucosaminyl](n+1) + UDP + H(+). In terms of biological role, polymerizes chitin, a structural polymer of the cell wall and septum, by transferring the sugar moiety of UDP-GlcNAc to the non-reducing end of the growing chitin polymer. CHS1 mainly responsible for normal yeast cell reproductive growth. In Exophiala dermatitidis (strain ATCC 34100 / CBS 525.76 / NIH/UT8656) (Black yeast), this protein is Chitin synthase 1.